The chain runs to 384 residues: Substance-K receptor (384 aa).

Residues 1 to 32 are Extracellular-facing; the sequence is MGAHASVTDTNILSGLESNATGVTAFSMPGWQ. Asn-19 carries N-linked (GlcNAc...) asparagine glycosylation. Residues 33 to 56 traverse the membrane as a helical segment; the sequence is LALWATAYLALVLVAVTGNATVIW. The Cytoplasmic segment spans residues 57-69; the sequence is IILAHERMRTVTN. The chain crosses the membrane as a helical span at residues 70-90; the sequence is YFIINLALADLCMAAFNATFN. The Extracellular portion of the chain corresponds to 91–107; the sequence is FIYASHNIWYFGSTFCY. Cys-106 and Cys-181 are disulfide-bonded. The helical transmembrane segment at 108–129 threads the bilayer; it reads FQNLFPVTAMFVSIYSMTAIAA. Residues 130-149 are Cytoplasmic-facing; the sequence is DRYMAIVHPFQPRLSAPSTK. The chain crosses the membrane as a helical span at residues 150–170; that stretch reads AVIAVIWLVALALASPQCFYS. Over 171–196 the chain is Extracellular; it reads TITVDQGATKCVVAWPNDNGGKMLLL. The helical transmembrane segment at 197 to 218 threads the bilayer; sequence YHLVVFVLIYFLPLVVMFAAYS. Residues 219 to 251 are Cytoplasmic-facing; sequence VIGLTLWKRAVPRHQAHGANLRHLQAKKKFVKA. The chain crosses the membrane as a helical span at residues 252-272; sequence MVLVVVTFAICWLPYHLYFIL. The Extracellular segment spans residues 273 to 290; sequence GTFQEDIYYRKFIQQVYL. Residues 291 to 310 traverse the membrane as a helical segment; that stretch reads ALFWLAMSSTMYNPIIYCCL. Topologically, residues 311–384 are cytoplasmic; the sequence is NHRFRSGFRL…GPQDGEPAGP (74 aa). Cys-324 is lipidated: S-palmitoyl cysteine. Positions 365 to 384 are disordered; that stretch reads HSEATNGQVGGPQDGEPAGP.

The protein belongs to the G-protein coupled receptor 1 family.

The protein resides in the cell membrane. This is a receptor for the tachykinin neuropeptide substance K (neurokinin A). It is associated with G proteins that activate a phosphatidylinositol-calcium second messenger system. The rank order of affinity of this receptor to tachykinins is: substance K &gt; neuromedin-K &gt; substance P. In Mus musculus (Mouse), this protein is Substance-K receptor (Tacr2).